Reading from the N-terminus, the 244-residue chain is N-(5'-phosphoribosyl)anthranilate isomerase 3, chloroplastic (244 aa).

Residues 1 to 32 constitute a chloroplast transit peptide; sequence MSTGISSDLHLHPRALNFSKTSKSGLSNRKVS.

It belongs to the TrpF family.

It is found in the plastid. It localises to the chloroplast. The enzyme catalyses N-(5-phospho-beta-D-ribosyl)anthranilate = 1-(2-carboxyphenylamino)-1-deoxy-D-ribulose 5-phosphate. The protein operates within amino-acid biosynthesis; L-tryptophan biosynthesis; L-tryptophan from chorismate: step 3/5. In Arabidopsis thaliana (Mouse-ear cress), this protein is N-(5'-phosphoribosyl)anthranilate isomerase 3, chloroplastic (PAI3).